The chain runs to 445 residues: V-type proton ATPase subunit H (445 aa).

Belongs to the V-ATPase H subunit family. V-ATPase is a heteromultimeric enzyme composed of a peripheral catalytic V1 complex (components A to H) attached to an integral membrane V0 proton pore complex (components: a, c, c', c'' and d).

In terms of biological role, subunit of the peripheral V1 complex of vacuolar ATPase. Subunit H activates the ATPase activity of the enzyme and couples ATPase activity to proton flow. Vacuolar ATPase is responsible for acidifying a variety of intracellular compartments in eukaryotic cells, thus providing most of the energy required for transport processes in the vacuolar system. This chain is V-type proton ATPase subunit H (vatH), found in Dictyostelium discoideum (Social amoeba).